A 247-amino-acid chain; its full sequence is RNA polymerase sigma factor FliA (247 aa).

A sigma-70 factor domain-2 region spans residues 22-94 (LIQRYAPLVK…MLDEVRKGDW (73 aa)). The Interaction with polymerase core subunit RpoC motif lies at 49-52 (DLMQ). The segment at 102-171 (NTRMVTDAIR…GLPEDTSLSH (70 aa)) is sigma-70 factor domain-3. Residues 190–238 (AIAKLPERERLVLALYYDEELNLKEIGEVLGVSESRVSQLHSQCAARLR) form a sigma-70 factor domain-4 region. The H-T-H motif DNA-binding region spans 212–231 (LKEIGEVLGVSESRVSQLHS).

It belongs to the sigma-70 factor family. FliA subfamily.

Its subcellular location is the cytoplasm. In terms of biological role, sigma factors are initiation factors that promote the attachment of RNA polymerase to specific initiation sites and are then released. This sigma factor controls the expression of flagella-related genes. Required for the flagellin gene (fliC) expression. The protein is RNA polymerase sigma factor FliA of Pseudomonas aeruginosa (strain ATCC 15692 / DSM 22644 / CIP 104116 / JCM 14847 / LMG 12228 / 1C / PRS 101 / PAO1).